Here is a 227-residue protein sequence, read N- to C-terminus: MELVFIRHGFSEWNAKNLFTGWRDVNLTERGVEEAKTAGKKLLDKGYEFDIAFTSVLTRAIKTCNIVLEESHQLWIPQVKNWRLNERHYGALQGLDKKATAEQYGDEQVHIWRRSYDISPPDLDPQDPNSAHNDRRYANIPSDVVPNAENLKLTLERALPFWEDQIAPAMLSGKRVLVVAHGNSLRALAKHIIGISDAEIMDFEIPTGQPLVLKLDDKLNYVEHYYL.

Residues 7–14, 20–21, arginine 59, 86–89, lysine 97, 113–114, and 182–183 contribute to the substrate site; these read RHGFSEWN, TG, ERHY, RR, and GN. Histidine 8 (tele-phosphohistidine intermediate) is an active-site residue. The Proton donor/acceptor role is filled by glutamate 86.

The protein belongs to the phosphoglycerate mutase family. BPG-dependent PGAM subfamily. Homodimer.

The catalysed reaction is (2R)-2-phosphoglycerate = (2R)-3-phosphoglycerate. The protein operates within carbohydrate degradation; glycolysis; pyruvate from D-glyceraldehyde 3-phosphate: step 3/5. Catalyzes the interconversion of 2-phosphoglycerate and 3-phosphoglycerate. The protein is 2,3-bisphosphoglycerate-dependent phosphoglycerate mutase of Haemophilus influenzae (strain ATCC 51907 / DSM 11121 / KW20 / Rd).